A 601-amino-acid polypeptide reads, in one-letter code: A-type ATP synthase subunit A (601 aa).

236-243 (GPFGSGKT) serves as a coordination point for ATP.

It belongs to the ATPase alpha/beta chains family. Has multiple subunits with at least A(3), B(3), C, D, E, F, H, I and proteolipid K(x).

It localises to the cell membrane. The catalysed reaction is ATP + H2O + 4 H(+)(in) = ADP + phosphate + 5 H(+)(out). In terms of biological role, component of the A-type ATP synthase that produces ATP from ADP in the presence of a proton gradient across the membrane. The A chain is the catalytic subunit. This is A-type ATP synthase subunit A from Hyperthermus butylicus (strain DSM 5456 / JCM 9403 / PLM1-5).